The sequence spans 394 residues: Ornithine aminotransferase 1 (394 aa).

Lysine 252 carries the post-translational modification N6-(pyridoxal phosphate)lysine.

Belongs to the class-III pyridoxal-phosphate-dependent aminotransferase family. OAT subfamily. It depends on pyridoxal 5'-phosphate as a cofactor.

It is found in the cytoplasm. It catalyses the reaction a 2-oxocarboxylate + L-ornithine = L-glutamate 5-semialdehyde + an L-alpha-amino acid. Its pathway is amino-acid biosynthesis; L-proline biosynthesis; L-glutamate 5-semialdehyde from L-ornithine: step 1/1. Its function is as follows. Catalyzes the interconversion of ornithine to glutamate semialdehyde. This is Ornithine aminotransferase 1 from Staphylococcus saprophyticus subsp. saprophyticus (strain ATCC 15305 / DSM 20229 / NCIMB 8711 / NCTC 7292 / S-41).